The chain runs to 427 residues: Peptidase B (427 aa).

Residues K195 and D200 each contribute to the Mn(2+) site. Residue K207 is part of the active site. Positions 218, 277, and 279 each coordinate Mn(2+). R281 is a catalytic residue.

The protein belongs to the peptidase M17 family. Homohexamer. Mn(2+) serves as cofactor.

Its subcellular location is the cytoplasm. It carries out the reaction Release of an N-terminal amino acid, Xaa, from a peptide or arylamide. Xaa is preferably Glu or Asp but may be other amino acids, including Leu, Met, His, Cys and Gln.. In terms of biological role, probably plays an important role in intracellular peptide degradation. The protein is Peptidase B of Salmonella arizonae (strain ATCC BAA-731 / CDC346-86 / RSK2980).